The primary structure comprises 33 residues: Mu/delta-theraphotoxin-Pm2a (33 aa).

3 disulfides stabilise this stretch: Cys-2-Cys-16, Cys-9-Cys-21, and Cys-15-Cys-27. Phe-33 carries the post-translational modification Phenylalanine amide.

As to expression, expressed by the venom gland.

The protein localises to the secreted. Its function is as follows. Gating-modifier toxin with very weak activity on Nav1.7/SCN9A and Nav1.8/SCN10A. Shows 22% peak current inhibition (at 10 uM) on Nav1.8/SCN10A sodium channels. Show peak current inhibition and delays fast inactivation on Nav1.7/SCN9A (EC(50)&gt;10 uM). This is Mu/delta-theraphotoxin-Pm2a from Poecilotheria metallica (Metallic blue ornamental tree spider).